We begin with the raw amino-acid sequence, 211 residues long: Nucleoside triphosphate pyrophosphatase (211 aa).

The active-site Proton acceptor is the Asp-75.

It belongs to the Maf family. It depends on a divalent metal cation as a cofactor.

The protein resides in the cytoplasm. It catalyses the reaction a ribonucleoside 5'-triphosphate + H2O = a ribonucleoside 5'-phosphate + diphosphate + H(+). It carries out the reaction a 2'-deoxyribonucleoside 5'-triphosphate + H2O = a 2'-deoxyribonucleoside 5'-phosphate + diphosphate + H(+). Functionally, nucleoside triphosphate pyrophosphatase. May have a dual role in cell division arrest and in preventing the incorporation of modified nucleotides into cellular nucleic acids. The sequence is that of Nucleoside triphosphate pyrophosphatase from Prochlorococcus marinus (strain NATL2A).